We begin with the raw amino-acid sequence, 349 residues long: MVRAKRKLDHIEYALSTGQSRTHGFHDIDFVHQSLPNSNYDTITCETKIGELSLSSPIFINAMTGGGGEKTLHINEQLAYVAKHHNLAMAVGSQMAALKDESEAASYKIIRKVNPNGIFFANLGSEATVEQAERAVDMVEANALQIHLNVIQELTMPEGDRDFTGVLQRIEKIVLNSKVPVIVKEVGFGMSKETMQQLASVGVTAIDIGGQGGTNFAAVENERRQRMLSYFNNWGIQTATSIIEATSTNNNLSFIASGGIQTALDVAKAIALGANTTAFAGYFLRILMQDGIEKLVDEIDLLHADLKFIMTALGAKTIEELQSVPLVVKGETYHWLTQRGIDTTHYSRR.

6–7 (RK) contacts substrate. Residues 62-64 (AMT), serine 93, and asparagine 122 contribute to the FMN site. Glutamine 152 contributes to the substrate binding site. Glutamate 153 provides a ligand contact to Mg(2+). FMN contacts are provided by residues lysine 184, threonine 214, 258–259 (GG), and 280–281 (AG).

The protein belongs to the IPP isomerase type 2 family. As to quaternary structure, homooctamer. Dimer of tetramers. FMN is required as a cofactor. Requires NADPH as cofactor. It depends on Mg(2+) as a cofactor.

It is found in the cytoplasm. The catalysed reaction is isopentenyl diphosphate = dimethylallyl diphosphate. Its function is as follows. Involved in the biosynthesis of isoprenoids. Catalyzes the 1,3-allylic rearrangement of the homoallylic substrate isopentenyl (IPP) to its allylic isomer, dimethylallyl diphosphate (DMAPP). In Bacillus cereus (strain AH187), this protein is Isopentenyl-diphosphate delta-isomerase.